We begin with the raw amino-acid sequence, 344 residues long: GTP 3',8-cyclase (344 aa).

The region spanning 19-239 is the Radical SAM core domain; the sequence is PFGRTIDYLR…ANYTLTDLPD (221 aa). Arginine 28 contributes to the GTP binding site. Residues cysteine 35 and cysteine 39 each contribute to the [4Fe-4S] cluster site. An S-adenosyl-L-methionine-binding site is contributed by tyrosine 41. Cysteine 42 contributes to the [4Fe-4S] cluster binding site. Arginine 77 is a binding site for GTP. Glycine 81 serves as a coordination point for S-adenosyl-L-methionine. Residue threonine 111 participates in GTP binding. Serine 135 lines the S-adenosyl-L-methionine pocket. Lysine 171 serves as a coordination point for GTP. Methionine 205 serves as a coordination point for S-adenosyl-L-methionine. [4Fe-4S] cluster-binding residues include cysteine 268 and cysteine 271. 273-275 contacts GTP; it reads RVR. Cysteine 285 is a binding site for [4Fe-4S] cluster.

It belongs to the radical SAM superfamily. MoaA family. As to quaternary structure, monomer and homodimer. It depends on [4Fe-4S] cluster as a cofactor.

It carries out the reaction GTP + AH2 + S-adenosyl-L-methionine = (8S)-3',8-cyclo-7,8-dihydroguanosine 5'-triphosphate + 5'-deoxyadenosine + L-methionine + A + H(+). It participates in cofactor biosynthesis; molybdopterin biosynthesis. In terms of biological role, catalyzes the cyclization of GTP to (8S)-3',8-cyclo-7,8-dihydroguanosine 5'-triphosphate. The chain is GTP 3',8-cyclase from Rhodopseudomonas palustris (strain ATCC BAA-98 / CGA009).